We begin with the raw amino-acid sequence, 337 residues long: Inositol 2-dehydrogenase 1 (337 aa).

Belongs to the Gfo/Idh/MocA family. In terms of assembly, homotetramer.

It catalyses the reaction myo-inositol + NAD(+) = scyllo-inosose + NADH + H(+). In terms of biological role, involved in the oxidation of myo-inositol (MI) to 2-keto-myo-inositol (2KMI or 2-inosose). This chain is Inositol 2-dehydrogenase 1, found in Paenarthrobacter aurescens (strain TC1).